We begin with the raw amino-acid sequence, 1017 residues long: GPI ethanolamine phosphate transferase 3 (1017 aa).

The helical transmembrane segment at 34–54 (FYIILLVFIAILQFISIAFFT) threads the bilayer. N-linked (GlcNAc...) asparagine glycans are attached at residues Asn-66, Asn-71, Asn-100, Asn-182, and Asn-203. Residues 347–367 (VSSLALLMGQPIPFNNLGWPI) form a helical membrane-spanning segment. An N-linked (GlcNAc...) asparagine glycan is attached at Asn-411. The next 6 membrane-spanning stretches (helical) occupy residues 457–477 (LLAT…SIVV), 484–504 (FVPG…GIFY), 515–535 (FWGT…ITIF), 558–578 (IAVM…FTIW), 582–602 (IVAF…VFLP), and 644–664 (LGGY…MITI). N-linked (GlcNAc...) asparagine glycosylation is found at Asn-681 and Asn-682. The helical transmembrane segment at 685 to 705 (WWVLGLCFLMIFILPACITGY) threads the bilayer. A glycan (N-linked (GlcNAc...) asparagine) is linked at Asn-707. Residues 715 to 735 (AAPIWINVFLKGILGLNFVYW) form a helical membrane-spanning segment. Residue Asn-742 is glycosylated (N-linked (GlcNAc...) asparagine). The next 6 helical transmembrane spans lie at 765–785 (IIAG…PLCI), 806–826 (NIYG…ILLF), 829–849 (PLAQ…LEII), 903–923 (IAII…VALL), 947–967 (GILL…VTHF), and 981–1001 (FIFA…GTIA).

This sequence belongs to the PIGG/PIGN/PIGO family. PIGO subfamily. Glycosylated.

It is found in the endoplasmic reticulum membrane. The protein operates within glycolipid biosynthesis; glycosylphosphatidylinositol-anchor biosynthesis. Its function is as follows. Involved in glycosylphosphatidylinositol-anchor biosynthesis. Transfers ethanolamine phosphate to the GPI third mannose which links the GPI-anchor to the C-terminus of the proteins by an amide bond. Involved in cell wall biosynthesis. This is GPI ethanolamine phosphate transferase 3 (GPI13) from Saccharomyces cerevisiae (strain ATCC 204508 / S288c) (Baker's yeast).